The following is a 355-amino-acid chain: Phytoene synthase (355 aa).

This sequence belongs to the phytoene/squalene synthase family. Requires ATP as cofactor. Mn(2+) is required as a cofactor. The cofactor is Mg(2+).

Its pathway is carotenoid biosynthesis; phytoene biosynthesis. Functionally, involved in the biosynthesis of carotenoids. Catalyzes the condensation of two molecules of geranylgeranyl diphosphate (GGPP) to give prephytoene diphosphate (PPPP) and the subsequent rearrangement of the cyclopropylcarbinyl intermediate to yield phytoene. In Cereibacter sphaeroides (strain ATCC 17023 / DSM 158 / JCM 6121 / CCUG 31486 / LMG 2827 / NBRC 12203 / NCIMB 8253 / ATH 2.4.1.) (Rhodobacter sphaeroides), this protein is Phytoene synthase (crtB).